We begin with the raw amino-acid sequence, 168 residues long: uncharacterized protein (168 aa).

A compositionally biased stretch (basic and acidic residues) spans 1 to 15 (MKEASDREEAPKMVE). Residues 1-36 (MKEASDREEAPKMVEKNYSTGFRKAHGEKDQSVTKP) are disordered.

Its subcellular location is the cytoplasm. This is an uncharacterized protein from Saccharomyces cerevisiae (strain ATCC 204508 / S288c) (Baker's yeast).